Consider the following 61-residue polypeptide: Temporin-ALj (61 aa).

Residues 1 to 22 (MFTLKKSLLLLFFLATINLSFC) form the signal peptide. A propeptide spanning residues 23-46 (EQERNAEEERRDEPDERNAEVEKR) is cleaved from the precursor. Leu59 is modified (leucine amide).

This sequence belongs to the frog skin active peptide (FSAP) family. Temporin subfamily. In terms of tissue distribution, expressed by the skin glands.

It is found in the secreted. Its function is as follows. Antimicrobial peptide with activity against Gram-positive and Gram-negative bacteria and against fungi. Has been tested against S.aureus (MIC=7.5 ug/mL), B.pumilus (MIC=15.0 ug/mL), B.cereus (MIC=75.0 ug/mL), E.coli (MIC=15.0 ug/mL), B.dysenteriae (MIC=30.0 ug/mL), A.cacoaceticus (MIC=60.0 ug/mL), P.aeruginosa (MIC=7.5 ug/mL) and C.albicans (MIC=5.0 ug/mL). Also shows a weak hemolytic activity. The protein is Temporin-ALj of Amolops loloensis (Lolokou Sucker Frog).